We begin with the raw amino-acid sequence, 542 residues long: Glutamyl-tRNA(Gln) amidotransferase subunit A, mitochondrial (542 aa).

Active-site charge relay system residues include K55 and S143. Residue S167 is the Acyl-ester intermediate of the active site.

This sequence belongs to the amidase family. GatA subfamily. Subunit of the heterotrimeric GatCAB amidotransferase (AdT) complex, composed of A, B and C subunits.

It is found in the mitochondrion. The enzyme catalyses L-glutamyl-tRNA(Gln) + L-glutamine + ATP + H2O = L-glutaminyl-tRNA(Gln) + L-glutamate + ADP + phosphate + H(+). Its function is as follows. Allows the formation of correctly charged Gln-tRNA(Gln) through the transamidation of misacylated Glu-tRNA(Gln) in the mitochondria. The reaction takes place in the presence of glutamine and ATP through an activated gamma-phospho-Glu-tRNA(Gln). In Neurospora crassa (strain ATCC 24698 / 74-OR23-1A / CBS 708.71 / DSM 1257 / FGSC 987), this protein is Glutamyl-tRNA(Gln) amidotransferase subunit A, mitochondrial.